The primary structure comprises 167 residues: DNA-directed RNA polymerase II subunit rpb-9 (167 aa).

The tract at residues Asp28 to Ser49 is disordered. Residues Asn34 to Glu44 show a composition bias toward polar residues. 8 residues coordinate Zn(2+): Cys59, Cys62, Cys81, Cys84, Cys128, Cys131, Cys156, and Cys161. The segment at Cys59 to Cys84 adopts a C4-type zinc-finger fold. The TFIIS-type zinc finger occupies Glu124–Thr166.

Belongs to the archaeal RpoM/eukaryotic RPA12/RPB9/RPC11 RNA polymerase family. In terms of assembly, component of the RNA polymerase II (Pol II) complex consisting of 12 subunits. As to expression, expressed in the soma and in the germline.

The protein localises to the nucleus. It is found in the nucleolus. Its function is as follows. DNA-dependent RNA polymerase catalyzes the transcription of DNA into RNA using the four ribonucleoside triphosphates as substrates. Component of RNA polymerase II which synthesizes mRNA precursors and many functional non-coding RNAs. Pol II is the central component of the basal RNA polymerase II transcription machinery. It is composed of mobile elements that move relative to each other. RPB9 is part of the upper jaw surrounding the central large cleft and thought to grab the incoming DNA template. Recruits ints-6, a component of the Integrator complex to PIWI-interacting RNA (piRNA) genes, to mediate Integrator complex-dependent cleavage of 3' ends of nascent transcripts upon RNA Pol II backtracking to terminate transcription and generate piRNA precursors. Promotes the biogenesis of secondary 22G-siRNAs (a class of 22 nucleotide siRNAs that possess a triphosphorylated guanine residue at the 5'-end). Involved in gene silencing mediated by a class of 21 nucleotide piRNAs that possess a uracil residue at the 5'-end (also called 21U-RNAs) and guide the Piwi protein prg-1 to its DNA targets for silencing. Plays a role in small RNA-directed transgenerational epigenetic inheritance (also called RNAe) over several generations. Not required for the transgenerational inheritance of exogenous small interfering RNAs (RNAi). May play a role in the silencing of the DNA transposable elements from the DNA transposon families, Chapaev-2 and CEMUDR1. This chain is DNA-directed RNA polymerase II subunit rpb-9, found in Caenorhabditis elegans.